A 142-amino-acid polypeptide reads, in one-letter code: Large ribosomal subunit protein uL11 (142 aa).

This sequence belongs to the universal ribosomal protein uL11 family. In terms of assembly, part of the ribosomal stalk of the 50S ribosomal subunit. Interacts with L10 and the large rRNA to form the base of the stalk. L10 forms an elongated spine to which L12 dimers bind in a sequential fashion forming a multimeric L10(L12)X complex. One or more lysine residues are methylated.

Functionally, forms part of the ribosomal stalk which helps the ribosome interact with GTP-bound translation factors. This Photorhabdus laumondii subsp. laumondii (strain DSM 15139 / CIP 105565 / TT01) (Photorhabdus luminescens subsp. laumondii) protein is Large ribosomal subunit protein uL11.